Consider the following 612-residue polypeptide: Threonine--tRNA ligase (612 aa).

Positions 218-509 (DHRKLGVELG…LSEHFGGNFP (292 aa)) are catalytic. Residues Cys-310, His-361, and His-486 each contribute to the Zn(2+) site.

This sequence belongs to the class-II aminoacyl-tRNA synthetase family. Homodimer. Requires Zn(2+) as cofactor.

The protein resides in the cytoplasm. It catalyses the reaction tRNA(Thr) + L-threonine + ATP = L-threonyl-tRNA(Thr) + AMP + diphosphate + H(+). In terms of biological role, catalyzes the attachment of threonine to tRNA(Thr) in a two-step reaction: L-threonine is first activated by ATP to form Thr-AMP and then transferred to the acceptor end of tRNA(Thr). Also edits incorrectly charged L-seryl-tRNA(Thr). This is Threonine--tRNA ligase from Helicobacter pylori (strain P12).